The primary structure comprises 287 residues: uncharacterized protein (287 aa).

Positions methionine 1–asparagine 17 are enriched in basic and acidic residues. The segment at methionine 1–phenylalanine 29 is disordered. Residues leucine 38–glycine 60 form a helical membrane-spanning segment.

The protein localises to the membrane. This is an uncharacterized protein from Escherichia coli O6:H1 (strain CFT073 / ATCC 700928 / UPEC).